Here is a 458-residue protein sequence, read N- to C-terminus: tRNA modification GTPase MnmE (458 aa).

Residues R26, E88, and R127 each coordinate (6S)-5-formyl-5,6,7,8-tetrahydrofolate. The region spanning 224–378 (GLSTAIIGRP…IEDRINQLFF (155 aa)) is the TrmE-type G domain. N234 contributes to the K(+) binding site. GTP-binding positions include 234-239 (NVGKSS), 253-259 (TDIAGTT), and 278-281 (DTAG). S238 is a binding site for Mg(2+). 3 residues coordinate K(+): T253, I255, and T258. T259 is a Mg(2+) binding site. K458 is a binding site for (6S)-5-formyl-5,6,7,8-tetrahydrofolate.

Belongs to the TRAFAC class TrmE-Era-EngA-EngB-Septin-like GTPase superfamily. TrmE GTPase family. As to quaternary structure, homodimer. Heterotetramer of two MnmE and two MnmG subunits. K(+) serves as cofactor.

It is found in the cytoplasm. Its function is as follows. Exhibits a very high intrinsic GTPase hydrolysis rate. Involved in the addition of a carboxymethylaminomethyl (cmnm) group at the wobble position (U34) of certain tRNAs, forming tRNA-cmnm(5)s(2)U34. The chain is tRNA modification GTPase MnmE from Streptococcus pyogenes serotype M12 (strain MGAS9429).